The sequence spans 304 residues: Small glutamine-rich tetratricopeptide repeat-containing protein beta (304 aa).

TPR repeat units follow at residues Leu15 to Asp49, Ala85 to Asn118, Val120 to Tyr152, and Ser153 to Asn186. Position 131 is an N6-acetyllysine (Lys131). Phosphoserine is present on residues Ser293, Ser295, and Ser297.

The protein belongs to the SGT family. In terms of assembly, homooligomerize.

Functionally, co-chaperone that binds directly to HSC70 and HSP70 and regulates their ATPase activity. This chain is Small glutamine-rich tetratricopeptide repeat-containing protein beta (Sgtb), found in Mus musculus (Mouse).